The following is a 266-amino-acid chain: Phosphatidylglycerol--prolipoprotein diacylglyceryl transferase (266 aa).

A run of 7 helical transmembrane segments spans residues 10–30 (VALA…LIGI), 56–76 (LVFW…VLFY), 92–112 (WKGG…VWWF), 120–140 (FFQL…AGRI), 171–191 (PSQL…LWLF), 199–219 (ASVS…VEFV), and 233–253 (WLTM…ALMV). Residue arginine 139 participates in a 1,2-diacyl-sn-glycero-3-phospho-(1'-sn-glycerol) binding.

The protein belongs to the Lgt family.

The protein localises to the cell inner membrane. The enzyme catalyses L-cysteinyl-[prolipoprotein] + a 1,2-diacyl-sn-glycero-3-phospho-(1'-sn-glycerol) = an S-1,2-diacyl-sn-glyceryl-L-cysteinyl-[prolipoprotein] + sn-glycerol 1-phosphate + H(+). It functions in the pathway protein modification; lipoprotein biosynthesis (diacylglyceryl transfer). In terms of biological role, catalyzes the transfer of the diacylglyceryl group from phosphatidylglycerol to the sulfhydryl group of the N-terminal cysteine of a prolipoprotein, the first step in the formation of mature lipoproteins. This is Phosphatidylglycerol--prolipoprotein diacylglyceryl transferase from Pseudomonas aeruginosa (strain LESB58).